The sequence spans 85 residues: Small ribosomal subunit protein bS20 (85 aa).

Disordered regions lie at residues 1–25 (MANI…ASIK) and 62–85 (ARKG…QVNA).

This sequence belongs to the bacterial ribosomal protein bS20 family.

Functionally, binds directly to 16S ribosomal RNA. The chain is Small ribosomal subunit protein bS20 from Bacillus cereus (strain G9842).